The primary structure comprises 366 residues: Sperm equatorial segment protein 1 (366 aa).

A signal peptide spans 1-18 (MKFLVLLVALLLWPSSLP). Asn129 carries N-linked (GlcNAc...) asparagine glycosylation. The disordered stretch occupies residues 139 to 204 (PFIEKDEPEP…EDVPQLSGDN (66 aa)). Positions 144–157 (DEPEPEPEPEPEPE) are enriched in acidic residues. The segment covering 165-189 (APTQVPSVTEPSQDVTSLSGSTDLG) has biased composition (polar residues).

It belongs to the SPESP1 family. Glycosylated. In testis there are two predominant forms of 77- and 67-kDa and a form of 47-kDa, whereas in epididymal sperm from caput, corpus, and cauda there are two forms of 47- and 43-kDa. Testis forms contain complex carbohydrate residues. Epididymal sperm forms are N-glycosylated. Then undergoes significant glycosylation in the testis and that the majority of these glycoconjugates are removed by the time sperm reach the caput epididymis.

The protein localises to the cytoplasmic vesicle. It localises to the secretory vesicle. It is found in the acrosome. Involved in fertilization ability of sperm. The protein is Sperm equatorial segment protein 1 of Bos taurus (Bovine).